The primary structure comprises 535 residues: MNKLLVFILLLLLLINISFARKRSYIKNTDASIVVTQFGAIKGIVEDTHRVFYGVPFAQPPVNQLRWENPIDLKPWENVRETLTQKSQCAQKCNLGPGVCSPIGTSEDCLYLDVFTPKDATPNSKYPVIVYIPGGAFSVGSGSVPLYDATKFAQSSVIVVNINYRLGVLGFMGTDLMHGNYGFLDQIKALEWVYNNIGSFGGNKEMITIWGESAGAFSVSAHLTSTYSRQYFNAAISSSSPLTVGLKDKTTARGNANRFATNVGCNIEDLTCLRGKSMDEILDAQEKVGLTFGDKILDAFTIWSPVIDGDIIPMQPLTAVKEGKTYDVPTIIGNVKHEAIPFIYSFFQDSVGIDYYRVLVAIVFPLNAMKILPLYPAAPRGQDSRPILSELITDYLFRCPDRYHTVTNAKKLSSPTYHYHYVHVKSTGHSLDACDDKVCHGTELSLFFNSYELMGERLDNDEKELAIDINNYIVNFATTHNPNTGLDVPVQWRQVTSTQNSTLILETTIETKDTFTNDPKCNALDLTYYRNQVRP.

An N-terminal signal peptide occupies residues 1–20; that stretch reads MNKLLVFILLLLLLINISFA. An intrachain disulfide couples cysteine 89 to cysteine 109. Catalysis depends on serine 213, which acts as the Acyl-ester intermediate. Cysteine 265 and cysteine 272 are joined by a disulfide. Catalysis depends on charge relay system residues glutamate 338 and histidine 440. A glycan (N-linked (GlcNAc...) asparagine) is linked at asparagine 500.

It belongs to the type-B carboxylesterase/lipase family.

Its subcellular location is the cytoplasmic vesicle. The protein resides in the esterosome membrane. This chain is cAMP-regulated D2 protein (D2), found in Dictyostelium discoideum (Social amoeba).